Consider the following 75-residue polypeptide: Small ribosomal subunit protein bS18 (75 aa).

Belongs to the bacterial ribosomal protein bS18 family. Part of the 30S ribosomal subunit. Forms a tight heterodimer with protein bS6.

Functionally, binds as a heterodimer with protein bS6 to the central domain of the 16S rRNA, where it helps stabilize the platform of the 30S subunit. This chain is Small ribosomal subunit protein bS18, found in Clostridioides difficile (strain 630) (Peptoclostridium difficile).